The chain runs to 264 residues: uncharacterized protein (264 aa).

13-20 (TGSTSGIG) contacts NADP(+). Ser141 serves as a coordination point for substrate. The Proton acceptor role is filled by Tyr154.

This sequence belongs to the short-chain dehydrogenases/reductases (SDR) family.

This is an uncharacterized protein from Bacillus subtilis (strain 168).